Consider the following 75-residue polypeptide: Putative DNA-directed RNA polymerase subunit omega (75 aa).

The protein belongs to the RNA polymerase subunit omega family.

Its subcellular location is the plastid. It localises to the chloroplast. It carries out the reaction RNA(n) + a ribonucleoside 5'-triphosphate = RNA(n+1) + diphosphate. May be involved in RNA polymerase activity. In Porphyra purpurea (Red seaweed), this protein is Putative DNA-directed RNA polymerase subunit omega (rpoZ).